A 412-amino-acid polypeptide reads, in one-letter code: Serine hydroxymethyltransferase (412 aa).

Residues Leu-117 and 121–123 each bind (6S)-5,6,7,8-tetrahydrofolate; that span reads GHL. The residue at position 226 (Lys-226) is an N6-(pyridoxal phosphate)lysine. Residues Glu-242 and 350 to 352 contribute to the (6S)-5,6,7,8-tetrahydrofolate site; that span reads SPF.

It belongs to the SHMT family. As to quaternary structure, homodimer. Pyridoxal 5'-phosphate serves as cofactor.

It is found in the cytoplasm. It carries out the reaction (6R)-5,10-methylene-5,6,7,8-tetrahydrofolate + glycine + H2O = (6S)-5,6,7,8-tetrahydrofolate + L-serine. The protein operates within one-carbon metabolism; tetrahydrofolate interconversion. It participates in amino-acid biosynthesis; glycine biosynthesis; glycine from L-serine: step 1/1. Functionally, catalyzes the reversible interconversion of serine and glycine with tetrahydrofolate (THF) serving as the one-carbon carrier. Appears to be specific for THF as the pteridine substrate, since the use of tetrahydromethanopterin (H4MPT) is much less efficient. Also exhibits THF-independent aldolase activity toward beta-hydroxyamino acids, producing glycine and aldehydes, via a retro-aldol mechanism. Thus, is able to catalyze the cleavage of L-allo-threonine and L-threo-beta-phenylserine. The sequence is that of Serine hydroxymethyltransferase from Methanosarcina barkeri (strain Fusaro / DSM 804).